The primary structure comprises 80 residues: Acyl carrier protein (80 aa).

Positions 4–79 constitute a Carrier domain; it reads EEILQKVCSI…DAVKFIEEKK (76 aa). At Ser39 the chain carries O-(pantetheine 4'-phosphoryl)serine.

This sequence belongs to the acyl carrier protein (ACP) family. Post-translationally, 4'-phosphopantetheine is transferred from CoA to a specific serine of apo-ACP by AcpS. This modification is essential for activity because fatty acids are bound in thioester linkage to the sulfhydryl of the prosthetic group.

Its subcellular location is the cytoplasm. It functions in the pathway lipid metabolism; fatty acid biosynthesis. Its function is as follows. Carrier of the growing fatty acid chain in fatty acid biosynthesis. The chain is Acyl carrier protein from Prochlorococcus marinus subsp. pastoris (strain CCMP1986 / NIES-2087 / MED4).